Consider the following 289-residue polypeptide: ATP synthase gamma chain (289 aa).

The protein belongs to the ATPase gamma chain family. In terms of assembly, F-type ATPases have 2 components, CF(1) - the catalytic core - and CF(0) - the membrane proton channel. CF(1) has five subunits: alpha(3), beta(3), gamma(1), delta(1), epsilon(1). CF(0) has three main subunits: a, b and c.

Its subcellular location is the cell inner membrane. In terms of biological role, produces ATP from ADP in the presence of a proton gradient across the membrane. The gamma chain is believed to be important in regulating ATPase activity and the flow of protons through the CF(0) complex. In Haemophilus influenzae (strain ATCC 51907 / DSM 11121 / KW20 / Rd), this protein is ATP synthase gamma chain.